A 175-amino-acid chain; its full sequence is Endoribonuclease YbeY (175 aa).

Positions 129, 133, and 139 each coordinate Zn(2+).

The protein belongs to the endoribonuclease YbeY family. Zn(2+) serves as cofactor.

It localises to the cytoplasm. In terms of biological role, single strand-specific metallo-endoribonuclease involved in late-stage 70S ribosome quality control and in maturation of the 3' terminus of the 16S rRNA. In Lactobacillus gasseri (strain ATCC 33323 / DSM 20243 / BCRC 14619 / CIP 102991 / JCM 1131 / KCTC 3163 / NCIMB 11718 / NCTC 13722 / AM63), this protein is Endoribonuclease YbeY.